The sequence spans 250 residues: Ribonuclease PH (250 aa).

Residues Arg-87 and 125 to 127 (GTR) contribute to the phosphate site.

The protein belongs to the RNase PH family. As to quaternary structure, homohexameric ring arranged as a trimer of dimers.

The enzyme catalyses tRNA(n+1) + phosphate = tRNA(n) + a ribonucleoside 5'-diphosphate. Its function is as follows. Phosphorolytic 3'-5' exoribonuclease that plays an important role in tRNA 3'-end maturation. Removes nucleotide residues following the 3'-CCA terminus of tRNAs; can also add nucleotides to the ends of RNA molecules by using nucleoside diphosphates as substrates, but this may not be physiologically important. Probably plays a role in initiation of 16S rRNA degradation (leading to ribosome degradation) during starvation. The protein is Ribonuclease PH of Moorella thermoacetica (strain ATCC 39073 / JCM 9320).